Reading from the N-terminus, the 432-residue chain is Glutamate-1-semialdehyde 2,1-aminomutase (432 aa).

Residue lysine 265 is modified to N6-(pyridoxal phosphate)lysine.

This sequence belongs to the class-III pyridoxal-phosphate-dependent aminotransferase family. HemL subfamily. As to quaternary structure, homodimer. Pyridoxal 5'-phosphate serves as cofactor.

The protein resides in the cytoplasm. The catalysed reaction is (S)-4-amino-5-oxopentanoate = 5-aminolevulinate. It functions in the pathway porphyrin-containing compound metabolism; protoporphyrin-IX biosynthesis; 5-aminolevulinate from L-glutamyl-tRNA(Glu): step 2/2. This chain is Glutamate-1-semialdehyde 2,1-aminomutase, found in Photobacterium profundum (strain SS9).